Reading from the N-terminus, the 96-residue chain is MSLLTEVETPIRNEWGCRCNDSSDPLVVAASIIGIVHLILWIIDRLFSKSIYRIFKHGLKRGPSTEGVPESMREEYREEQQNAVDADDGHFVSIEL.

The Virion surface portion of the chain corresponds to 1–22 (MSLLTEVETPIRNEWGCRCNDS). N-linked (GlcNAc...) asparagine; by host glycosylation occurs at asparagine 20. Residues 23–43 (SDPLVVAASIIGIVHLILWII) traverse the membrane as a helical; Signal-anchor for type III membrane protein segment. At 44-96 (DRLFSKSIYRIFKHGLKRGPSTEGVPESMREEYREEQQNAVDADDGHFVSIEL) the chain is on the intravirion side. The disordered stretch occupies residues 61–88 (RGPSTEGVPESMREEYREEQQNAVDADD). Phosphoserine; by host is present on serine 64. The span at 71-80 (SMREEYREEQ) shows a compositional bias: basic and acidic residues. A Phosphoserine; by host modification is found at serine 93.

The protein belongs to the influenza viruses matrix protein M2 family. In terms of assembly, homotetramer; composed of two disulfide-linked dimers held together by non-covalent interactions. May interact with matrix protein 1.

The protein localises to the virion membrane. The protein resides in the host apical cell membrane. Its activity is regulated as follows. The M2 protein from most influenza A strains is inhibited by amantadine and rimantadine, resulting in viral uncoating incapacity. Emergence of amantadine-resistant variants is usually rapid. Its function is as follows. Forms a proton-selective ion channel that is necessary for the efficient release of the viral genome during virus entry. After attaching to the cell surface, the virion enters the cell by endocytosis. Acidification of the endosome triggers M2 ion channel activity. The influx of protons into virion interior is believed to disrupt interactions between the viral ribonucleoprotein (RNP), matrix protein 1 (M1), and lipid bilayers, thereby freeing the viral genome from interaction with viral proteins and enabling RNA segments to migrate to the host cell nucleus, where influenza virus RNA transcription and replication occur. Also plays a role in viral proteins secretory pathway. Elevates the intravesicular pH of normally acidic compartments, such as trans-Golgi network, preventing newly formed hemagglutinin from premature switching to the fusion-active conformation. The sequence is that of Matrix protein 2 from Influenza A virus (strain A/New Zealand:South Canterbury/35/2000 H1N1).